We begin with the raw amino-acid sequence, 120 residues long: Methylglyoxal synthase (120 aa).

The 120-residue stretch at 1–120 (MRIALIAHDN…TAEILVESVL (120 aa)) folds into the MGS-like domain. Residues histidine 8, lysine 12, and 54 to 55 (SG) each bind substrate. Aspartate 60 serves as the catalytic Proton donor/acceptor. Position 87 (histidine 87) interacts with substrate.

This sequence belongs to the methylglyoxal synthase family.

It carries out the reaction dihydroxyacetone phosphate = methylglyoxal + phosphate. Its function is as follows. Catalyzes the formation of methylglyoxal from dihydroxyacetone phosphate. The protein is Methylglyoxal synthase of Natranaerobius thermophilus (strain ATCC BAA-1301 / DSM 18059 / JW/NM-WN-LF).